A 345-amino-acid chain; its full sequence is Neuropeptide receptor 15 (345 aa).

The Extracellular segment spans residues Met-1–Cys-11. Residues Phe-12–Ala-32 traverse the membrane as a helical segment. Residues Gly-33–Ser-40 are Cytoplasmic-facing. A helical transmembrane segment spans residues Val-41–Ile-61. The Extracellular portion of the chain corresponds to Pro-62 to Cys-90. Cys-82 and Cys-171 are disulfide-bonded. The chain crosses the membrane as a helical span at residues Val-91–Ile-111. Residues Val-112 to Asn-125 are Cytoplasmic-facing. Residues Val-126–Val-146 traverse the membrane as a helical segment. Topologically, residues Trp-147–Thr-187 are extracellular. A helical transmembrane segment spans residues Glu-188 to Ala-208. The Cytoplasmic segment spans residues Lys-209–Lys-246. The chain crosses the membrane as a helical span at residues Met-247–Leu-267. The Extracellular segment spans residues Ser-268–Asp-281. Residues Phe-282–Phe-304 form a helical membrane-spanning segment. Residues Ser-305–Asn-345 lie on the Cytoplasmic side of the membrane.

The protein belongs to the G-protein coupled receptor 1 family. As to expression, expressed in pharyngeal muscle and AWC, ASG, ASE, ASI, and ASJ sensory neurons. Expressed in ASI neuron. Expressed in AFD neurons and in AVK interneuron.

It is found in the cell membrane. In terms of biological role, probable receptor for neuropeptide ligand nlp-8 that plays a role in octopamine signaling and specifically, the octopamine inhibition of aversion responses in olfactory sensory neurons. Plays a crucial role in daf-7 expression. Acts in concert with gpa-4 to activate TGF-beta-like daf-7 secretion in the ASI neuron, thereby promoting larval development and inhibition of dauer diapause. Suppresses immune response against pathogenic infection by inhibiting transcription regulators elt-2 and hlh-30 in ASJ neuron. Promotes pathogen avoidance behavior via intestinal gon-2, independent of aerotaxis. The chain is Neuropeptide receptor 15 (npr-15) from Caenorhabditis elegans.